The primary structure comprises 297 residues: Phosphatidylserine decarboxylase proenzyme (297 aa).

Residues Asp-90, His-147, and Ser-252 each act as charge relay system; for autoendoproteolytic cleavage activity in the active site. Residue Ser-252 is the Schiff-base intermediate with substrate; via pyruvic acid; for decarboxylase activity of the active site. Residue Ser-252 is modified to Pyruvic acid (Ser); by autocatalysis.

It belongs to the phosphatidylserine decarboxylase family. PSD-B subfamily. Prokaryotic type I sub-subfamily. As to quaternary structure, heterodimer of a large membrane-associated beta subunit and a small pyruvoyl-containing alpha subunit. It depends on pyruvate as a cofactor. Is synthesized initially as an inactive proenzyme. Formation of the active enzyme involves a self-maturation process in which the active site pyruvoyl group is generated from an internal serine residue via an autocatalytic post-translational modification. Two non-identical subunits are generated from the proenzyme in this reaction, and the pyruvate is formed at the N-terminus of the alpha chain, which is derived from the carboxyl end of the proenzyme. The autoendoproteolytic cleavage occurs by a canonical serine protease mechanism, in which the side chain hydroxyl group of the serine supplies its oxygen atom to form the C-terminus of the beta chain, while the remainder of the serine residue undergoes an oxidative deamination to produce ammonia and the pyruvoyl prosthetic group on the alpha chain. During this reaction, the Ser that is part of the protease active site of the proenzyme becomes the pyruvoyl prosthetic group, which constitutes an essential element of the active site of the mature decarboxylase.

Its subcellular location is the cell membrane. The enzyme catalyses a 1,2-diacyl-sn-glycero-3-phospho-L-serine + H(+) = a 1,2-diacyl-sn-glycero-3-phosphoethanolamine + CO2. It participates in phospholipid metabolism; phosphatidylethanolamine biosynthesis; phosphatidylethanolamine from CDP-diacylglycerol: step 2/2. Its function is as follows. Catalyzes the formation of phosphatidylethanolamine (PtdEtn) from phosphatidylserine (PtdSer). The protein is Phosphatidylserine decarboxylase proenzyme of Stutzerimonas stutzeri (strain A1501) (Pseudomonas stutzeri).